The following is a 511-amino-acid chain: Phosphoenolpyruvate carboxylase (511 aa).

The protein belongs to the PEPCase type 2 family. In terms of assembly, homotetramer. Requires Mg(2+) as cofactor.

The catalysed reaction is oxaloacetate + phosphate = phosphoenolpyruvate + hydrogencarbonate. In terms of biological role, catalyzes the irreversible beta-carboxylation of phosphoenolpyruvate (PEP) to form oxaloacetate (OAA), a four-carbon dicarboxylic acid source for the tricarboxylic acid cycle. This chain is Phosphoenolpyruvate carboxylase, found in Saccharolobus islandicus (strain L.S.2.15 / Lassen #1) (Sulfolobus islandicus).